A 455-amino-acid chain; its full sequence is 2-succinylbenzoate--CoA ligase (455 aa).

This sequence belongs to the ATP-dependent AMP-binding enzyme family. MenE subfamily.

It catalyses the reaction 2-succinylbenzoate + ATP + CoA = 2-succinylbenzoyl-CoA + AMP + diphosphate. The protein operates within quinol/quinone metabolism; 1,4-dihydroxy-2-naphthoate biosynthesis; 1,4-dihydroxy-2-naphthoate from chorismate: step 5/7. Its pathway is quinol/quinone metabolism; menaquinone biosynthesis. In terms of biological role, converts 2-succinylbenzoate (OSB) to 2-succinylbenzoyl-CoA (OSB-CoA). The polypeptide is 2-succinylbenzoate--CoA ligase (Salmonella typhimurium (strain LT2 / SGSC1412 / ATCC 700720)).